A 242-amino-acid chain; its full sequence is Glucosamine-6-phosphate deaminase (242 aa).

Residue Asp67 is the Proton acceptor; for enolization step of the active site. The For ring-opening step role is filled by Asn136. His138 serves as the catalytic Proton acceptor; for ring-opening step. Glu143 serves as the catalytic For ring-opening step.

Belongs to the glucosamine/galactosamine-6-phosphate isomerase family. NagB subfamily.

The enzyme catalyses alpha-D-glucosamine 6-phosphate + H2O = beta-D-fructose 6-phosphate + NH4(+). It participates in amino-sugar metabolism; N-acetylneuraminate degradation; D-fructose 6-phosphate from N-acetylneuraminate: step 5/5. Catalyzes the reversible isomerization-deamination of glucosamine 6-phosphate (GlcN6P) to form fructose 6-phosphate (Fru6P) and ammonium ion. The chain is Glucosamine-6-phosphate deaminase from Alkaliphilus metalliredigens (strain QYMF).